Here is a 109-residue protein sequence, read N- to C-terminus: U4-lycotoxin-Ls1c (109 aa).

The first 22 residues, 1–22, serve as a signal peptide directing secretion; the sequence is MKVLVLFSVLFLTLFSYSSTEA. The propeptide occupies 23 to 44; it reads IDEFDSDAEDDMLSLMANEQVR. The knottin domain stretch occupies residues 45-88; the sequence is AKACTPRLHDCSHDRHSCCRGELFKDVCYCFYPEGEDITEVCSC. Intrachain disulfides connect Cys48-Cys63, Cys55-Cys72, Cys62-Cys88, and Cys74-Cys86. The interval 89-108 is linear cationic cytotoxin domain; the sequence is QQPKSHKYIEKVVDKAKTVV.

This sequence belongs to the neurotoxin 19 (CSTX) family. 05 (U4-Lctx) subfamily. As to expression, expressed by the venom gland.

Its subcellular location is the secreted. In terms of biological role, enhances the high-affinity desensitization of human P2RX3 purinoceptors. The sequence is that of U4-lycotoxin-Ls1c from Lycosa singoriensis (Wolf spider).